The following is a 96-amino-acid chain: Co-chaperonin GroES (96 aa).

Belongs to the GroES chaperonin family. As to quaternary structure, heptamer of 7 subunits arranged in a ring. Interacts with the chaperonin GroEL.

It localises to the cytoplasm. Functionally, together with the chaperonin GroEL, plays an essential role in assisting protein folding. The GroEL-GroES system forms a nano-cage that allows encapsulation of the non-native substrate proteins and provides a physical environment optimized to promote and accelerate protein folding. GroES binds to the apical surface of the GroEL ring, thereby capping the opening of the GroEL channel. The chain is Co-chaperonin GroES from Acidithiobacillus ferrooxidans (strain ATCC 23270 / DSM 14882 / CIP 104768 / NCIMB 8455) (Ferrobacillus ferrooxidans (strain ATCC 23270)).